The sequence spans 143 residues: Peptide methionine sulfoxide reductase MsrB (143 aa).

Residues 16-139 (DAELRRRLTP…NSAALNFESR (124 aa)) enclose the MsrB domain. Residues Cys-55, Cys-58, Cys-104, and Cys-107 each contribute to the Zn(2+) site. The Nucleophile role is filled by Cys-128.

Belongs to the MsrB Met sulfoxide reductase family. Zn(2+) is required as a cofactor.

It carries out the reaction L-methionyl-[protein] + [thioredoxin]-disulfide + H2O = L-methionyl-(R)-S-oxide-[protein] + [thioredoxin]-dithiol. The polypeptide is Peptide methionine sulfoxide reductase MsrB (Burkholderia orbicola (strain MC0-3)).